The primary structure comprises 604 residues: Proline--tRNA ligase (604 aa).

Belongs to the class-II aminoacyl-tRNA synthetase family. ProS type 1 subfamily. In terms of assembly, homodimer.

It localises to the cytoplasm. It carries out the reaction tRNA(Pro) + L-proline + ATP = L-prolyl-tRNA(Pro) + AMP + diphosphate. In terms of biological role, catalyzes the attachment of proline to tRNA(Pro) in a two-step reaction: proline is first activated by ATP to form Pro-AMP and then transferred to the acceptor end of tRNA(Pro). As ProRS can inadvertently accommodate and process non-cognate amino acids such as alanine and cysteine, to avoid such errors it has two additional distinct editing activities against alanine. One activity is designated as 'pretransfer' editing and involves the tRNA(Pro)-independent hydrolysis of activated Ala-AMP. The other activity is designated 'posttransfer' editing and involves deacylation of mischarged Ala-tRNA(Pro). The misacylated Cys-tRNA(Pro) is not edited by ProRS. This Trichormus variabilis (strain ATCC 29413 / PCC 7937) (Anabaena variabilis) protein is Proline--tRNA ligase.